We begin with the raw amino-acid sequence, 85 residues long: Small ribosomal subunit protein uS17 (85 aa).

Belongs to the universal ribosomal protein uS17 family. As to quaternary structure, part of the 30S ribosomal subunit.

In terms of biological role, one of the primary rRNA binding proteins, it binds specifically to the 5'-end of 16S ribosomal RNA. The protein is Small ribosomal subunit protein uS17 of Aggregatibacter actinomycetemcomitans (Actinobacillus actinomycetemcomitans).